The following is a 167-amino-acid chain: Large ribosomal subunit protein uL10 (167 aa).

It belongs to the universal ribosomal protein uL10 family. Part of the ribosomal stalk of the 50S ribosomal subunit. The N-terminus interacts with L11 and the large rRNA to form the base of the stalk. The C-terminus forms an elongated spine to which L12 dimers bind in a sequential fashion forming a multimeric L10(L12)X complex.

Forms part of the ribosomal stalk, playing a central role in the interaction of the ribosome with GTP-bound translation factors. The chain is Large ribosomal subunit protein uL10 from Lactiplantibacillus plantarum (strain ATCC BAA-793 / NCIMB 8826 / WCFS1) (Lactobacillus plantarum).